A 469-amino-acid chain; its full sequence is Calcium-binding mitochondrial carrier protein SCaMC-2 (469 aa).

Residues 1–189 lie on the Mitochondrial intermembrane side of the membrane; the sequence is MLCLCLYVPL…ERQTGMWWRH (189 aa). EF-hand domains follow at residues 47-80, 78-113, and 114-149; these read TYRQ…QDHE, DHEK…LGVK, and ISEQ…HPVE. Positions 60, 62, 64, 66, and 71 each coordinate Ca(2+). 3 Solcar repeats span residues 184-270, 278-363, and 375-463; these read GMWW…IKRL, LRIH…LKNA, and PGVF…LKIT. Residues 190–207 traverse the membrane as a helical segment; sequence LVAGGGAGAVSRTCTAPL. Topologically, residues 208–244 are mitochondrial matrix; it reads DRLKVLMQVHASRSNNMCIVGGFTQMIREGGARSLWR. Residues 245–264 traverse the membrane as a helical segment; sequence GNGINVLKIAPESAIKFMAY. The Mitochondrial intermembrane portion of the chain corresponds to 265–287; that stretch reads EQIKRLIGSDQETLRIHERLVAG. Residues 288-301 form a helical membrane-spanning segment; sequence SLAGAIAQSSIYPM. The Mitochondrial matrix segment spans residues 302–337; the sequence is EVLKTRMALRKTGQYSGMLDCARKILAREGMAAFYK. The helical transmembrane segment at 338–357 threads the bilayer; sequence GYVPNMLGIIPYAGIDLAVY. At 358–380 the chain is on the mitochondrial intermembrane side; that stretch reads ETLKNAWLQRYAVNSADPGVFVL. Residues 381–398 traverse the membrane as a helical segment; the sequence is LACGTMSSTCGQLASYPL. At 399–437 the chain is on the mitochondrial matrix side; it reads ALVRTRMQAQASMEGAPEVTMSSLFKQILRTEGAFGLYR. A helical membrane pass occupies residues 438–457; sequence GLAPNFMKVIPAVSISYVVY. The Mitochondrial intermembrane portion of the chain corresponds to 458-469; sequence ENLKITLGVQSR.

Belongs to the mitochondrial carrier (TC 2.A.29) family.

The protein resides in the mitochondrion inner membrane. In terms of biological role, calcium-dependent mitochondrial solute carrier. Mitochondrial solute carriers shuttle metabolites, nucleotides, and cofactors through the mitochondrial inner membrane. May act as a ATP-Mg/Pi exchanger that mediates the transport of Mg-ATP in exchange for phosphate, catalyzing the net uptake or efflux of adenine nucleotides into or from the mitochondria. The chain is Calcium-binding mitochondrial carrier protein SCaMC-2 (SLC25A25) from Bos taurus (Bovine).